A 70-amino-acid chain; its full sequence is Large ribosomal subunit protein bL31 (70 aa).

Zn(2+)-binding residues include Cys16, Cys18, Cys37, and Cys40.

The protein belongs to the bacterial ribosomal protein bL31 family. Type A subfamily. Part of the 50S ribosomal subunit. It depends on Zn(2+) as a cofactor.

Functionally, binds the 23S rRNA. The polypeptide is Large ribosomal subunit protein bL31 (Saccharophagus degradans (strain 2-40 / ATCC 43961 / DSM 17024)).